The following is a 290-amino-acid chain: Glycine--tRNA ligase alpha subunit (290 aa).

This sequence belongs to the class-II aminoacyl-tRNA synthetase family. Tetramer of two alpha and two beta subunits.

Its subcellular location is the cytoplasm. It catalyses the reaction tRNA(Gly) + glycine + ATP = glycyl-tRNA(Gly) + AMP + diphosphate. This Synechococcus sp. (strain CC9902) protein is Glycine--tRNA ligase alpha subunit.